The chain runs to 430 residues: UDP-N-acetylmuramoylalanine--D-glutamate ligase (430 aa).

Residue 109–115 coordinates ATP; that stretch reads GTDGKST.

Belongs to the MurCDEF family.

The protein localises to the cytoplasm. It carries out the reaction UDP-N-acetyl-alpha-D-muramoyl-L-alanine + D-glutamate + ATP = UDP-N-acetyl-alpha-D-muramoyl-L-alanyl-D-glutamate + ADP + phosphate + H(+). It functions in the pathway cell wall biogenesis; peptidoglycan biosynthesis. Cell wall formation. Catalyzes the addition of glutamate to the nucleotide precursor UDP-N-acetylmuramoyl-L-alanine (UMA). The protein is UDP-N-acetylmuramoylalanine--D-glutamate ligase of Thermotoga maritima (strain ATCC 43589 / DSM 3109 / JCM 10099 / NBRC 100826 / MSB8).